The primary structure comprises 2084 residues: MAP kinase-activating death domain protein (2084 aa).

Residues 25 to 352 enclose the uDENN domain; sequence TPPMPKGLQG…VPVPGSTRVE (328 aa). The disordered stretch occupies residues 117–253; the sequence is PSSAAGSAGA…SPRASRKRTK (137 aa). Positions 118–131 are enriched in low complexity; that stretch reads SSAAGSAGAGNDRP. A compositionally biased stretch (gly residues) spans 132–152; that stretch reads GNGGPGGHGGGAGGGAGGGGR. Positions 160–173 are enriched in basic and acidic residues; the sequence is FRRESWRKSMERSS. Residues 174 to 183 are compositionally biased toward low complexity; it reads DSAFSSDYRS. The span at 189-204 shows a compositional bias: basic and acidic residues; it reads DSDRELTSRRDSDQQR. Basic residues predominate over residues 205-215; sequence LHSHHSHHQPH. The segment covering 234 to 245 has biased composition (polar residues); sequence DSESGGSHSPSP. The 142-residue stretch at 373 to 514 folds into the cDENN domain; that stretch reads RFSLVDFPLH…EGTILKNHLK (142 aa). Residues 516–678 form the dDENN domain; the sequence is ALTSMTATNT…EWSLTPTNVA (163 aa). Disordered stretches follow at residues 557–588, 730–749, 811–863, 891–963, 1058–1092, 1115–1188, and 1305–1382; these read TPPH…NSPA, QPTD…SSSY, VASK…TVGS, QESD…SQSS, HSAG…GNNF, FGKK…AENQ, and SSSL…GQST. A compositionally biased stretch (polar residues) spans 558–588; sequence PPHSAQASQRNSMSAQGTISSRQPSPMNSPA. A compositionally biased stretch (low complexity) spans 824–839; the sequence is SPVSSSSSRSDLSSPS. Over residues 913–925 the composition is skewed to basic and acidic residues; that stretch reads HPSDSESRPEKKI. The segment covering 946–963 has biased composition (low complexity); that stretch reads GSSGSSSSSPGRQSSQSS. A compositionally biased stretch (low complexity) spans 1121–1131; the sequence is QKQVPVQQKQP. Basic and acidic residues predominate over residues 1168 to 1183; it reads TQEELTRQQNQERSHS. Residues 1305–1315 are compositionally biased toward low complexity; sequence SSSLLSSHAAS. Composition is skewed to polar residues over residues 1324–1353 and 1370–1382; these read RSPS…STQL and RLSS…GQST. The region spanning 1490-1565 is the Death domain; it reads GMDQGPIEMM…GLVYSQEVHN (76 aa). The segment covering 1794–1842 has biased composition (low complexity); it reads DIHAQQKQKHQQQQQHQQPQQQQQPHQTTTQQNQPTAVASAVPTTTAPA. Disordered regions lie at residues 1794–1865 and 1896–2084; these read DIHA…RHTV and VPVP…HRKH. Positions 1845 to 1858 are enriched in polar residues; it reads VNPNRMTAKSQAGS. Residues 1896 to 1907 show a composition bias toward pro residues; that stretch reads VPVPPTPAPPTS. A compositionally biased stretch (polar residues) spans 1921–1932; the sequence is SQPSTESLASIS. Pro residues-rich tracts occupy residues 1933–1953 and 1983–1993; these read SPPP…PAIP and QYTPQPPPPFV. Low complexity-rich tracts occupy residues 2001–2029 and 2059–2077; these read LARA…HSQS and ISGS…ASAS.

Belongs to the MADD family.

The protein localises to the cell membrane. It localises to the cytoplasm. In terms of biological role, guanyl-nucleotide exchange factor that regulates small GTPases. Converts GDP-bound inactive form of Rab3 to the GTP-bound active forms. The protein is MAP kinase-activating death domain protein of Drosophila melanogaster (Fruit fly).